Here is a 93-residue protein sequence, read N- to C-terminus: MLKPLGDRVIVEVVEEEEQTVGGIVLANNAKQKPQTGKVVAVGEGALTPEGKRLPMAVKVGDTVLYDKYAGSEVKYEGQDYLVLHEKDIMAIA.

It belongs to the GroES chaperonin family. In terms of assembly, heptamer of 7 subunits arranged in a ring. Interacts with the chaperonin GroEL.

Its subcellular location is the cytoplasm. Together with the chaperonin GroEL, plays an essential role in assisting protein folding. The GroEL-GroES system forms a nano-cage that allows encapsulation of the non-native substrate proteins and provides a physical environment optimized to promote and accelerate protein folding. GroES binds to the apical surface of the GroEL ring, thereby capping the opening of the GroEL channel. The chain is Co-chaperonin GroES from Lacticaseibacillus paracasei (strain ATCC 334 / BCRC 17002 / CCUG 31169 / CIP 107868 / KCTC 3260 / NRRL B-441) (Lactobacillus paracasei).